The sequence spans 69 residues: Large ribosomal subunit protein uL29 (69 aa).

This sequence belongs to the universal ribosomal protein uL29 family.

In Staphylococcus haemolyticus (strain JCSC1435), this protein is Large ribosomal subunit protein uL29.